Reading from the N-terminus, the 289-residue chain is ATP synthase gamma chain (289 aa).

It belongs to the ATPase gamma chain family. As to quaternary structure, F-type ATPases have 2 components, CF(1) - the catalytic core - and CF(0) - the membrane proton channel. CF(1) has five subunits: alpha(3), beta(3), gamma(1), delta(1), epsilon(1). CF(0) has three main subunits: a, b and c.

It is found in the cell membrane. In terms of biological role, produces ATP from ADP in the presence of a proton gradient across the membrane. The gamma chain is believed to be important in regulating ATPase activity and the flow of protons through the CF(0) complex. This is ATP synthase gamma chain from Lactococcus lactis subsp. cremoris (strain SK11).